A 281-amino-acid polypeptide reads, in one-letter code: UPF0750 membrane protein YvjA (281 aa).

5 consecutive transmembrane segments (helical) span residues 14-34, 56-76, 77-97, 108-128, and 149-169; these read YVYILIGAAITAVSFNVFLLP, AAYVQWIINIPLFIAGVILLG, GKFGLKTLAGSVFLPLVVFLT, LLAAIFGGVGIGIGIGIVYLG, and SLGKCLAIIDGMIVVTAMIVF.

The protein belongs to the UPF0750 family.

Its subcellular location is the cell membrane. In Bacillus subtilis (strain 168), this protein is UPF0750 membrane protein YvjA (yvjA).